Here is a 177-residue protein sequence, read N- to C-terminus: Outer envelope pore protein 21, chloroplastic (177 aa).

The Cytoplasmic segment spans residues 1 to 21; that stretch reads METSLRYGGDSKALKIHAKEK. Residues 22–31 form a beta stranded membrane-spanning segment; sequence LRIDTNTFFQ. The Chloroplast intermembrane segment spans residues 32–55; it reads VRGGLDTKTGQPSSGSALIRHFYP. A beta stranded transmembrane segment spans residues 56–65; the sequence is NFSATLGVGV. The Cytoplasmic portion of the chain corresponds to 66–81; sequence RYDKQDSVGVRYAKND. A beta stranded membrane pass occupies residues 82–91; that stretch reads KLRYTVLAKK. Over 92–97 the chain is Chloroplast intermembrane; it reads TFPVTN. The chain crosses the membrane as a beta stranded span at residues 98-107; that stretch reads DGLVNFKIKG. The Cytoplasmic segment spans residues 108–120; sequence GCDVDQDFKEWKS. The beta stranded transmembrane segment at 121-130 threads the bilayer; that stretch reads RGGAEFSWNV. The Chloroplast intermembrane portion of the chain corresponds to 131-137; the sequence is FNFQKDQ. The chain crosses the membrane as a beta stranded span at residues 138–147; the sequence is DVRLRIGYEA. Topologically, residues 148–152 are cytoplasmic; that stretch reads FEQVP. A beta stranded membrane pass occupies residues 153-162; it reads YLQIRENNWT. Over 163–168 the chain is Chloroplast intermembrane; sequence FNADYK. A beta stranded transmembrane segment spans residues 169–177; that stretch reads GRWNVRYDL.

This sequence belongs to the plastid outer envelope porin OEP21 (TC 1.B.29) family. Present in roots, shoots and leaves.

It localises to the plastid. Its subcellular location is the etioplast membrane. It is found in the chloroplast outer membrane. Its function is as follows. Voltage-dependent rectifying anion channel that facilitates the translocation between chloroplast and cytoplasm of phosphorylated carbohydrates such as triosephosphate, 3-phosphoglycerate and inorganic phosphate (Pi) depending of ATP to triosephosphate ratio in the plastidial intermembrane space; in high triosephosphate/ATP conditions (e.g. photosynthesis), export of triosphosphate from chloroplast (outward rectifying channels), but in high ATP/triosephosphate conditions (e.g. dark phase), import of phosphosolutes (inward rectifying channels). In Pisum sativum (Garden pea), this protein is Outer envelope pore protein 21, chloroplastic (OEP21).